The sequence spans 111 residues: Toxin 3FTx-Tri2 (111 aa).

The first 19 residues, 1–19 (MKTLLLALVVLAFVCLGSA), serve as a signal peptide directing secretion. The propeptide occupies 20–34 (DQVGLGKEQIDRGRR). A Pyrrolidone carboxylic acid modification is found at Gln35. Disulfide bonds link Cys44-Cys68, Cys47-Cys55, Cys61-Cys87, Cys91-Cys102, and Cys103-Cys108.

It belongs to the three-finger toxin family. Ancestral subfamily. Boigatoxin sub-subfamily. As to expression, expressed by the venom gland.

The protein localises to the secreted. In terms of biological role, potent postsynaptic neurotoxin. Displays readily reversible competitive antagonism at the nicotinic acetylcholine receptor (nAChR). In Trimorphodon biscutatus (Western lyre snake), this protein is Toxin 3FTx-Tri2.